Here is a 500-residue protein sequence, read N- to C-terminus: Inner membrane transporter YjeM (500 aa).

Residues 1–10 are Cytoplasmic-facing; the sequence is MTHTIKKMSL. A helical transmembrane segment spans residues 11–31; that stretch reads IGLILMIFTSVFGFANSPSAF. The Periplasmic portion of the chain corresponds to 32 to 37; that stretch reads YLMGYS. A helical membrane pass occupies residues 38-58; that stretch reads AIPWYIFSALLFFIPFALMMA. Residues 59-83 are Cytoplasmic-facing; sequence EMGSAYRKEEGGIYSWMNNSVGPRY. Residues 84 to 104 form a helical membrane-spanning segment; that stretch reads AFIGTFMWFSSYVIWMVSTAA. Residues 105-124 are Periplasmic-facing; that stretch reads KIWVPFSTFVFGADMTQHWR. Residues 125 to 145 form a helical membrane-spanning segment; that stretch reads IAGLEPTQVVGLLAVGWMILV. Topologically, residues 146–163 are cytoplasmic; sequence TCVAARGINKIARITAVG. The helical transmembrane segment at 164 to 184 threads the bilayer; it reads GIAVMCLNLVLLLVSVAILLL. The Periplasmic portion of the chain corresponds to 185-209; the sequence is NGGHFAQEINFTSSPNPGYHSGLAM. Residues 210–230 form a helical membrane-spanning segment; sequence LSFVVFAIFAYGGIEAVGGLV. The Cytoplasmic segment spans residues 231–243; the sequence is DKTEKPEKNFAKG. The helical transmembrane segment at 244–264 threads the bilayer; sequence IVFAAIVISIGYSLAIFLWGV. The Periplasmic segment spans residues 265–308; sequence STNWQQILSNSAVNLGNITYILMSSLGTTLGNALNLSPEAAMTV. The helical transmembrane segment at 309–329 threads the bilayer; it reads GVWFARITGLSMFLAYTGAFF. Over 330 to 361 the chain is Cytoplasmic; it reads TLSYSPLKAIIQGTPKALWPAPMTTLNANGMP. A helical membrane pass occupies residues 362–382; the sequence is ATAMWLQCVLVSLFILLVSFG. At 383–394 the chain is on the periplasmic side; sequence GDTASAFYNKLT. The helical transmembrane segment at 395 to 415 threads the bilayer; sequence LMANVSMTLPYLFLALAFPFF. Topologically, residues 416–433 are cytoplasmic; sequence KARQDLERPFVLFKTKAS. The chain crosses the membrane as a helical span at residues 434–454; that stretch reads TLVATGVVVLVVTFANVFTII. At 455–462 the chain is on the periplasmic side; it reads QPVIEAGD. A helical transmembrane segment spans residues 463–483; that stretch reads WDSALWMIGGPIFFSLLAMAI. Residues 484–500 lie on the Cytoplasmic side of the membrane; that stretch reads YQNYSSRMSADPEWAAE.

Belongs to the amino acid-polyamine-organocation (APC) superfamily.

The protein resides in the cell inner membrane. The chain is Inner membrane transporter YjeM (yjeM) from Salmonella typhi.